Here is a 455-residue protein sequence, read N- to C-terminus: Acid sphingomyelinase-like phosphodiesterase 3b (455 aa).

The first 18 residues, 1–18 (MRLLAWLIFLANWGGARA), serve as a signal peptide directing secretion. Positions 28 and 30 each coordinate Zn(2+). Residues Cys45 and Cys64 are joined by a disulfide bond. An N-linked (GlcNAc...) asparagine glycan is attached at Asn72. Residues Asp93 and Asn134 each coordinate Zn(2+). A glycan (N-linked (GlcNAc...) asparagine) is linked at Asn164. Zn(2+) contacts are provided by His236, His277, and His279. Residue Asn343 is glycosylated (N-linked (GlcNAc...) asparagine). Disulfide bonds link Cys405–Cys409 and Cys415–Cys428.

It belongs to the acid sphingomyelinase family. Interacts with TLR4, TLR7, TLR8 and TLR9. The cofactor is Zn(2+). Post-translationally, N-glycosylated.

The protein localises to the secreted. Its subcellular location is the cell membrane. Its function is as follows. Lipid-modulating phosphodiesterase. Active on the surface of macrophages and dendritic cells and strongly influences macrophage lipid composition and membrane fluidity. Acts as a negative regulator of Toll-like receptor signaling. Has in vitro phosphodiesterase activity, but the physiological substrate is unknown. Lacks activity with phosphocholine-containing lipids, but can cleave CDP-choline, and can release phosphate from ATP and ADP (in vitro). In Homo sapiens (Human), this protein is Acid sphingomyelinase-like phosphodiesterase 3b (SMPDL3B).